Reading from the N-terminus, the 1651-residue chain is Vitellogenin-6 (1651 aa).

The first 15 residues, Met-1–Ala-15, serve as a signal peptide directing secretion. Positions Phe-34–Met-716 constitute a Vitellogenin domain. 2 N-linked (GlcNAc...) asparagine glycosylation sites follow: Asn-252 and Asn-1288. The 176-residue stretch at Ala-1340–Asn-1515 folds into the VWFD domain. 2 disulfide bridges follow: Cys-1342/Cys-1479 and Cys-1364/Cys-1514. The disordered stretch occupies residues Phe-1527 to Thr-1556.

Synthesized in Caenorhabditis only by 32 cells building the intestine of adult hermaphroditic individuals; they are cotranslationally secreted into the body cavity and subsequently taken up by the gonad.

It is found in the secreted. Its function is as follows. Precursor of the egg-yolk proteins that are sources of nutrients during embryonic development. May play a role in cholesterol uptake. May be involved in thermotolerance. This chain is Vitellogenin-6 (vit-6), found in Caenorhabditis elegans.